Consider the following 107-residue polypeptide: Pathogenesis-related protein PR-4 (107 aa).

A Barwin domain is found at 1-107; sequence QNINWDLRTA…VNYDFVDCGD (107 aa). Disulfide bonds link cysteine 14–cysteine 46, cysteine 35–cysteine 69, and cysteine 49–cysteine 105.

As to expression, preferentially expressed in the tissue surrounding the abscission zone of fruitlets.

It localises to the secreted. The protein localises to the cell wall. Functionally, may be involved in protecting plant tissues from pathogen infection. The chain is Pathogenesis-related protein PR-4 from Prunus persica (Peach).